The following is a 261-amino-acid chain: Carbonic anhydrase 1 (261 aa).

Ala-2 is subject to N-acetylalanine. The Alpha-carbonic anhydrase domain maps to 4 to 261 (ADWGYGSENG…LKGRTVRASF (258 aa)). His-65 (proton donor/acceptor) is an active-site residue. Zn(2+) contacts are provided by His-95, His-97, and His-120. Substrate contacts are provided by residues Thr-200 and 200–201 (TH). A disordered region spans residues 239-261 (AVPVLSNHRPPQPLKGRTVRASF).

Belongs to the alpha-carbonic anhydrase family. It depends on Zn(2+) as a cofactor.

It is found in the cytoplasm. It catalyses the reaction hydrogencarbonate + H(+) = CO2 + H2O. It carries out the reaction urea = cyanamide + H2O. Its activity is regulated as follows. Inhibited by acetazolamide. Its function is as follows. Catalyzes the reversible hydration of carbon dioxide. Can hydrate cyanamide to urea. This Mus musculus (Mouse) protein is Carbonic anhydrase 1 (Ca1).